The chain runs to 185 residues: Peptidyl-tRNA hydrolase (185 aa).

Y14 lines the tRNA pocket. H19 (proton acceptor) is an active-site residue. Residues F64, N66, and N112 each contribute to the tRNA site.

It belongs to the PTH family. Monomer.

Its subcellular location is the cytoplasm. It carries out the reaction an N-acyl-L-alpha-aminoacyl-tRNA + H2O = an N-acyl-L-amino acid + a tRNA + H(+). In terms of biological role, hydrolyzes ribosome-free peptidyl-tRNAs (with 1 or more amino acids incorporated), which drop off the ribosome during protein synthesis, or as a result of ribosome stalling. Catalyzes the release of premature peptidyl moieties from peptidyl-tRNA molecules trapped in stalled 50S ribosomal subunits, and thus maintains levels of free tRNAs and 50S ribosomes. The chain is Peptidyl-tRNA hydrolase from Caldanaerobacter subterraneus subsp. tengcongensis (strain DSM 15242 / JCM 11007 / NBRC 100824 / MB4) (Thermoanaerobacter tengcongensis).